The chain runs to 146 residues: Ribosome maturation factor RimP (146 aa).

The protein belongs to the RimP family.

The protein localises to the cytoplasm. Functionally, required for maturation of 30S ribosomal subunits. The sequence is that of Ribosome maturation factor RimP from Dechloromonas aromatica (strain RCB).